Reading from the N-terminus, the 413-residue chain is cAMP-dependent protein kinase regulatory subunit (413 aa).

A disordered region spans residues 1–145; it reads MADSSSFPGT…DSWTPPCHPK (145 aa). A dimerization and phosphorylation region spans residues 24-161; it reads SPIQKISEEE…RLKTAVSNNF (138 aa). A compositionally biased stretch (low complexity) spans 58–67; that stretch reads GNSFNGDNGS. A compositionally biased stretch (polar residues) spans 121-138; it reads TSVSAESLNPTSAGSDSW. Ser122 bears the Phosphoserine mark. 3',5'-cyclic AMP is bound by residues 162-291, Glu240, Arg249, 294-413, Glu361, and Arg370; these read LFSH…FLEE and LLSS…PSPS.

The protein belongs to the cAMP-dependent kinase regulatory chain family. Tetramer, composed of 2 regulatory (R) and 2 catalytic (C) subunits. In the presence of cAMP it dissociates into 2 active monomeric C subunits and an R dimer.

The sequence is that of cAMP-dependent protein kinase regulatory subunit (pkaR) from Aspergillus fumigatus (strain ATCC MYA-4609 / CBS 101355 / FGSC A1100 / Af293) (Neosartorya fumigata).